Consider the following 172-residue polypeptide: Capsid protein (172 aa).

The disordered stretch occupies residues 1 to 26; it reads MASKWNWSGTKGRRTPRRPYGRPYKS. The span at 11–20 shows a compositional bias: basic residues; sequence KGRRTPRRPY.

It belongs to the nanoviridae capsid protein family.

The protein resides in the virion. The polypeptide is Capsid protein (DNA-S) (Faba bean necrotic yellows virus (isolate Syrian SV292-88) (FBNYV)).